Consider the following 147-residue polypeptide: Hemoglobin subunit beta (147 aa).

At V2 the chain carries N-acetylvaline. Residues 3-147 (HLTGEEKAAV…VANALAHKYH (145 aa)) form the Globin domain. T13 is modified (phosphothreonine). S45 carries the phosphoserine modification. The residue at position 60 (K60) is an N6-acetyllysine. Residue H64 coordinates heme b. Residue K83 is modified to N6-acetyllysine. H93 lines the heme b pocket. Residue C94 is modified to S-nitrosocysteine. K145 carries the post-translational modification N6-acetyllysine.

The protein belongs to the globin family. In terms of assembly, heterotetramer of two alpha chains and two beta chains. In terms of tissue distribution, red blood cells.

Involved in oxygen transport from the lung to the various peripheral tissues. The chain is Hemoglobin subunit beta (HBB) from Cheracebus torquatus (Collared titi monkey).